Reading from the N-terminus, the 188-residue chain is Pro-adrenomedullin (188 aa).

Residues methionine 1–threonine 21 form the signal peptide. Arginine amide is present on arginine 41. The propeptide occupies glutamate 45–valine 92. Cysteines 110 and 115 form a disulfide. The tract at residues aspartate 131–proline 177 is disordered. A Tyrosine amide modification is found at tyrosine 146. A propeptide spans serine 153–isoleucine 188 (preproAM C-terminal fragment).

Belongs to the adrenomedullin family. Highly expressed in adrenal glands, lung and kidney.

The protein localises to the secreted. Its function is as follows. Adrenomedullin/ADM and proadrenomedullin N-20 terminal peptide/PAMP are peptide hormones that act as potent hypotensive and vasodilatator agents. Numerous actions have been reported most related to the physiologic control of fluid and electrolyte homeostasis. In terms of biological role, ADM function is mediated by the CALCRL-RAMP2 and CALCRL-RAMP3 receptor complexes with ADM showing the highest potency for the CALCRL-RAMP2 complex. This is Pro-adrenomedullin (ADM) from Sus scrofa (Pig).